The chain runs to 209 residues: MIGLVGKKVGMTRIFTEDGVSIPVTVIEIEANRVTQVKSLENDGYRAVQVTTGAKKANRVTKPEAGHFAKAGVEAGRGLWEFRLPEGQEFTAGQEISVEIFADVKKVDVTGTSKGKGFAGTVKRWNFRTQDATHGNSLSHRVPGSIGQNQTPGKVFKGKKMAGHMGDERVTVQSLDVVRVDAERNLLLVKGAVPGATGGNLIVKPAVKA.

Residues 133 to 152 are disordered; sequence THGNSLSHRVPGSIGQNQTP. Position 150 is an N5-methylglutamine (Q150).

This sequence belongs to the universal ribosomal protein uL3 family. As to quaternary structure, part of the 50S ribosomal subunit. Forms a cluster with proteins L14 and L19. Post-translationally, methylated by PrmB.

One of the primary rRNA binding proteins, it binds directly near the 3'-end of the 23S rRNA, where it nucleates assembly of the 50S subunit. The protein is Large ribosomal subunit protein uL3 of Yersinia pseudotuberculosis serotype O:1b (strain IP 31758).